Consider the following 205-residue polypeptide: Fe/S biogenesis protein NfuA (205 aa).

Residues Cys162 and Cys165 each contribute to the [4Fe-4S] cluster site.

It belongs to the NfuA family. As to quaternary structure, homodimer. The cofactor is [4Fe-4S] cluster.

Functionally, involved in iron-sulfur cluster biogenesis. Binds a 4Fe-4S cluster, can transfer this cluster to apoproteins, and thereby intervenes in the maturation of Fe/S proteins. Could also act as a scaffold/chaperone for damaged Fe/S proteins. The sequence is that of Fe/S biogenesis protein NfuA from Blochmanniella floridana.